Reading from the N-terminus, the 212-residue chain is Thiamine-phosphate synthase (212 aa).

4-amino-2-methyl-5-(diphosphooxymethyl)pyrimidine-binding positions include 40-44 (QFREK) and Asn75. Positions 76 and 95 each coordinate Mg(2+). Ser113 serves as a coordination point for 4-amino-2-methyl-5-(diphosphooxymethyl)pyrimidine. 139 to 141 (TPS) contributes to the 2-[(2R,5Z)-2-carboxy-4-methylthiazol-5(2H)-ylidene]ethyl phosphate binding site. Lys142 contributes to the 4-amino-2-methyl-5-(diphosphooxymethyl)pyrimidine binding site. 2-[(2R,5Z)-2-carboxy-4-methylthiazol-5(2H)-ylidene]ethyl phosphate-binding positions include Gly171 and 191–192 (IS).

This sequence belongs to the thiamine-phosphate synthase family. It depends on Mg(2+) as a cofactor.

The catalysed reaction is 2-[(2R,5Z)-2-carboxy-4-methylthiazol-5(2H)-ylidene]ethyl phosphate + 4-amino-2-methyl-5-(diphosphooxymethyl)pyrimidine + 2 H(+) = thiamine phosphate + CO2 + diphosphate. It catalyses the reaction 2-(2-carboxy-4-methylthiazol-5-yl)ethyl phosphate + 4-amino-2-methyl-5-(diphosphooxymethyl)pyrimidine + 2 H(+) = thiamine phosphate + CO2 + diphosphate. The enzyme catalyses 4-methyl-5-(2-phosphooxyethyl)-thiazole + 4-amino-2-methyl-5-(diphosphooxymethyl)pyrimidine + H(+) = thiamine phosphate + diphosphate. The protein operates within cofactor biosynthesis; thiamine diphosphate biosynthesis; thiamine phosphate from 4-amino-2-methyl-5-diphosphomethylpyrimidine and 4-methyl-5-(2-phosphoethyl)-thiazole: step 1/1. In terms of biological role, condenses 4-methyl-5-(beta-hydroxyethyl)thiazole monophosphate (THZ-P) and 2-methyl-4-amino-5-hydroxymethyl pyrimidine pyrophosphate (HMP-PP) to form thiamine monophosphate (TMP). The chain is Thiamine-phosphate synthase from Staphylococcus carnosus (strain TM300).